Here is a 410-residue protein sequence, read N- to C-terminus: Dihydrolipoyllysine-residue acetyltransferase component of pyruvate dehydrogenase complex (410 aa).

The Lipoyl-binding domain maps to 1-69 (MPDIGTDLVE…TTGSLIAILN (69 aa)). The residue at position 35 (Lys-35) is an N6-lipoyllysine. The segment at 81 to 100 (SSSYSFKNSKNTSTNSNLGN) is disordered. The Peripheral subunit-binding (PSBD) domain occupies 113 to 150 (HATPTVRRLARKFDIKLENITGTGRKGRILKEDVISYK). His-383 is an active-site residue.

It belongs to the 2-oxoacid dehydrogenase family. As to quaternary structure, forms a 24-polypeptide structural core with octahedral symmetry. Requires (R)-lipoate as cofactor.

The catalysed reaction is N(6)-[(R)-dihydrolipoyl]-L-lysyl-[protein] + acetyl-CoA = N(6)-[(R)-S(8)-acetyldihydrolipoyl]-L-lysyl-[protein] + CoA. The pyruvate dehydrogenase complex catalyzes the overall conversion of pyruvate to acetyl-CoA and CO(2). It contains multiple copies of three enzymatic components: pyruvate dehydrogenase (E1), dihydrolipoamide acetyltransferase (E2) and lipoamide dehydrogenase (E3). This Buchnera aphidicola subsp. Baizongia pistaciae (strain Bp) protein is Dihydrolipoyllysine-residue acetyltransferase component of pyruvate dehydrogenase complex (aceF).